We begin with the raw amino-acid sequence, 366 residues long: ATP-dependent 6-phosphofructokinase 2 (366 aa).

ATP-binding positions include Gly-15, Lys-78–Asp-79, and Gly-119–Thr-122. Asp-120 serves as a coordination point for Mg(2+). Residues Thr-142 to Asp-144, Arg-179, Met-186 to Arg-188, Glu-239, Arg-284, and His-290 to Arg-293 each bind substrate. The active-site Proton acceptor is the Asp-144.

This sequence belongs to the phosphofructokinase type A (PFKA) family. Mixed-substrate PFK group III subfamily. Homodimer or homotetramer. Mg(2+) is required as a cofactor.

It localises to the cytoplasm. It carries out the reaction beta-D-fructose 6-phosphate + ATP = beta-D-fructose 1,6-bisphosphate + ADP + H(+). It participates in carbohydrate degradation; glycolysis; D-glyceraldehyde 3-phosphate and glycerone phosphate from D-glucose: step 3/4. With respect to regulation, subject to allosteric activation by ADP and other diphosphonucleosides, and inhibition by phosphoenolpyruvate. Its function is as follows. Catalyzes the phosphorylation of D-fructose 6-phosphate to fructose 1,6-bisphosphate by ATP, the first committing step of glycolysis. This chain is ATP-dependent 6-phosphofructokinase 2, found in Clostridium perfringens (strain 13 / Type A).